The sequence spans 69 residues: Conotoxin LvVID (69 aa).

The first 17 residues, 1–17, serve as a signal peptide directing secretion; that stretch reads VLIIAVLFLTACQLTTA. A propeptide spanning residues 18–40 is cleaved from the precursor; that stretch reads ETYPRGQQRHHALRSTDKNSKLT. 3 disulfides stabilise this stretch: Cys43–Cys57, Cys50–Cys61, and Cys56–Cys68.

Belongs to the conotoxin O1 superfamily. As to expression, expressed by the venom duct.

The protein resides in the secreted. The chain is Conotoxin LvVID from Conus lividus (Livid cone).